Reading from the N-terminus, the 867-residue chain is Glutamate receptor 1.2 (867 aa).

A signal peptide spans 1–27; it reads MVRICIQTPILLSFLLVLLFFISNCFA. The Extracellular segment spans residues 28 to 560; sequence SSQNNDDDKR…SMWVFFQPLT (533 aa). 4 N-linked (GlcNAc...) asparagine glycosylation sites follow: Asn-301, Asn-400, Asn-496, and Asn-499. The chain crosses the membrane as a helical span at residues 561–581; it reads PNLWITSAAFFVLTGIIVWLI. Residues 582 to 590 are Cytoplasmic-facing; it reads ERAENKEFQ. A helical membrane pass occupies residues 591 to 611; it reads GSWPQQIGVVIWFGFSTLVYA. The Cytoplasmic segment spans residues 612 to 622; sequence HREKLQHNLSR. A helical transmembrane segment spans residues 623–643; sequence FVVTVWVFAVLILVTSYTATL. At 644–792 the chain is on the extracellular side; the sequence is TSMMTVQQIR…NPITLYRFRG (149 aa). 4 N-linked (GlcNAc...) asparagine glycosylation sites follow: Asn-676, Asn-688, Asn-699, and Asn-748. Residues 793-813 form a helical membrane-spanning segment; sequence LFMITGVSFAFALAVLLILWL. The Cytoplasmic portion of the chain corresponds to 814 to 867; it reads RERWEILVNSVNIYFSQRLRHFRILFTRTIHPSPLGLDNPIGENAVQMAQRNRR.

It belongs to the glutamate-gated ion channel (TC 1.A.10.1) family. As to quaternary structure, may form heteromers. Expressed predominantly in roots and siliques.

The protein localises to the membrane. Glutamate-gated receptor that probably acts as a non-selective cation channel. May be involved in light-signal transduction and calcium homeostasis via the regulation of calcium influx into cells. In Arabidopsis thaliana (Mouse-ear cress), this protein is Glutamate receptor 1.2 (GLR1.2).